The chain runs to 113 residues: DNA-binding protein Mevan_1162 (113 aa).

Residues 1-12 (MDPEEIKQKKLQ) are compositionally biased toward basic and acidic residues. Residues 1-22 (MDPEEIKQKKLQEMQAKAQDPE) are disordered.

Belongs to the PDCD5 family.

This is DNA-binding protein Mevan_1162 from Methanococcus vannielii (strain ATCC 35089 / DSM 1224 / JCM 13029 / OCM 148 / SB).